A 73-amino-acid polypeptide reads, in one-letter code: U-scoloptoxin(22)-Cw1a (73 aa).

Positions 1–24 (MRRFVFLAFVLVLFVIANLDSSSA) are cleaved as a signal peptide.

This sequence belongs to the scoloptoxin-22 family. In terms of processing, contains 1 disulfide bond. Expressed by the venom gland.

It localises to the secreted. This is U-scoloptoxin(22)-Cw1a from Cormocephalus westwoodi (Westwood's green centipede).